The following is a 231-amino-acid chain: 2-C-methyl-D-erythritol 4-phosphate cytidylyltransferase (231 aa).

It belongs to the IspD/TarI cytidylyltransferase family. IspD subfamily.

It catalyses the reaction 2-C-methyl-D-erythritol 4-phosphate + CTP + H(+) = 4-CDP-2-C-methyl-D-erythritol + diphosphate. It functions in the pathway isoprenoid biosynthesis; isopentenyl diphosphate biosynthesis via DXP pathway; isopentenyl diphosphate from 1-deoxy-D-xylulose 5-phosphate: step 2/6. Its function is as follows. Catalyzes the formation of 4-diphosphocytidyl-2-C-methyl-D-erythritol from CTP and 2-C-methyl-D-erythritol 4-phosphate (MEP). In Shewanella piezotolerans (strain WP3 / JCM 13877), this protein is 2-C-methyl-D-erythritol 4-phosphate cytidylyltransferase.